Here is a 406-residue protein sequence, read N- to C-terminus: Tryptophan synthase beta chain (406 aa).

Lysine 99 carries the post-translational modification N6-(pyridoxal phosphate)lysine.

Belongs to the TrpB family. As to quaternary structure, tetramer of two alpha and two beta chains. Requires pyridoxal 5'-phosphate as cofactor.

It catalyses the reaction (1S,2R)-1-C-(indol-3-yl)glycerol 3-phosphate + L-serine = D-glyceraldehyde 3-phosphate + L-tryptophan + H2O. It participates in amino-acid biosynthesis; L-tryptophan biosynthesis; L-tryptophan from chorismate: step 5/5. The beta subunit is responsible for the synthesis of L-tryptophan from indole and L-serine. The chain is Tryptophan synthase beta chain from Brucella anthropi (strain ATCC 49188 / DSM 6882 / CCUG 24695 / JCM 21032 / LMG 3331 / NBRC 15819 / NCTC 12168 / Alc 37) (Ochrobactrum anthropi).